We begin with the raw amino-acid sequence, 333 residues long: Homeobox protein Nkx-3.2 (333 aa).

2 disordered regions span residues 74-121 (PART…RARV) and 137-212 (DLEE…SRAA). Over residues 137 to 148 (DLEEEAPVRSDS) the composition is skewed to basic and acidic residues. The span at 179-191 (GAAGSGASGGQAG) shows a compositional bias: gly residues. Positions 206-265 (KKRSRAAFSHAQVFELERRFNHQRYLSGPERADLAASLKLTETQVKIWFQNRRYKTKRRQ) form a DNA-binding region, homeobox.

The protein belongs to the NK-3 homeobox family. Expressed widely in mesoderm at the gastroduodenal junction (at protein level). Expressed in visceral mesoderm and embryonic skeleton. Expression is restricted to immature proliferative chondrocytes during endochondral ossification.

Its subcellular location is the nucleus. Its function is as follows. Transcriptional repressor that acts as a negative regulator of chondrocyte maturation. PLays a role in distal stomach development; required for proper antral-pyloric morphogenesis and development of antral-type epithelium. In concert with GSC, defines the structural components of the middle ear; required for tympanic ring and gonium development and in the regulation of the width of the malleus. In Mus musculus (Mouse), this protein is Homeobox protein Nkx-3.2 (Nkx3-2).